The following is a 504-amino-acid chain: Sodium-coupled neutral amino acid symporter 2 (504 aa).

Residues M1–T28 are disordered. Topologically, residues M1–S79 are cytoplasmic. The regulates protein turnover upon amino acid deprivation stretch occupies residues M1–M99. Low complexity predominate over residues S19–T28. A helical transmembrane segment spans residues V80–M99. Position 85 (N85) interacts with Na(+). At A100–A105 the chain is on the extracellular side. A helical transmembrane segment spans residues M106–L126. The Cytoplasmic portion of the chain corresponds to K127–N161. The chain crosses the membrane as a helical span at residues F162–I180. The Extracellular segment spans residues R181–N189. A helical membrane pass occupies residues A190 to L210. The Cytoplasmic portion of the chain corresponds to S211–Y218. The chain crosses the membrane as a helical span at residues L219–Y239. Residues K240–T285 lie on the Extracellular side of the membrane. C246 and C274 are oxidised to a cystine. N-linked (GlcNAc...) asparagine glycans are attached at residues N254 and N258. Residues V286 to Y306 form a helical membrane-spanning segment. Over E307–N322 the chain is Cytoplasmic. The helical transmembrane segment at V323–F343 threads the bilayer. The Extracellular portion of the chain corresponds to N344–V364. Residues L365–F385 traverse the membrane as a helical segment. T379 is a binding site for Na(+). Over P386–H406 the chain is Cytoplasmic. Residues I407–I427 traverse the membrane as a helical segment. The Extracellular segment spans residues R428–D429. The helical transmembrane segment at I430–F450 threads the bilayer. Over Y451 to K465 the chain is Cytoplasmic. A helical transmembrane segment spans residues I466 to M488. The Extracellular segment spans residues D489 to H504.

This sequence belongs to the amino acid/polyamine transporter 2 family.

The protein localises to the cell membrane. The enzyme catalyses L-alanine(in) + Na(+)(in) = L-alanine(out) + Na(+)(out). The catalysed reaction is glycine(in) + Na(+)(in) = glycine(out) + Na(+)(out). It carries out the reaction L-serine(in) + Na(+)(in) = L-serine(out) + Na(+)(out). It catalyses the reaction L-proline(in) + Na(+)(in) = L-proline(out) + Na(+)(out). The enzyme catalyses L-methionine(in) + Na(+)(in) = L-methionine(out) + Na(+)(out). The catalysed reaction is L-histidine(in) + Na(+)(in) = L-histidine(out) + Na(+)(out). It carries out the reaction L-asparagine(in) + Na(+)(in) = L-asparagine(out) + Na(+)(out). It catalyses the reaction L-glutamine(in) + Na(+)(in) = L-glutamine(out) + Na(+)(out). The enzyme catalyses L-threonine(in) + Na(+)(in) = L-threonine(out) + Na(+)(out). The catalysed reaction is L-leucine(in) + Na(+)(in) = L-leucine(out) + Na(+)(out). It carries out the reaction L-phenylalanine(in) + Na(+)(in) = L-phenylalanine(out) + Na(+)(out). Inhibited by N-methyl-D-glucamine. Inhibited by choline. Allosteric regulation of sodium ions binding by pH. Functionally, symporter that cotransports neutral amino acids and sodium ions from the extracellular to the intracellular side of the cell membrane. The transport is pH-sensitive, Li(+)-intolerant, electrogenic, driven by the Na(+) electrochemical gradient and cotransports of neutral amino acids and sodium ions with a stoichiometry of 1:1. The protein is Sodium-coupled neutral amino acid symporter 2 of Danio rerio (Zebrafish).